A 130-amino-acid polypeptide reads, in one-letter code: MSATQYYGTGRRKTSTARVFAKVGSGNIVVNQRPLDEYFGRETARMVVRQPLELVEMTEKLDIYVTVKGGGITGQAGAIRHGITRALMELDEALRPSLRAAGFVTRDARKVERKKVGLRKARRKPQFSKR.

Belongs to the universal ribosomal protein uS9 family.

The chain is Small ribosomal subunit protein uS9 from Shewanella loihica (strain ATCC BAA-1088 / PV-4).